The sequence spans 714 residues: MGCNCTKGTRPDNDNVDNSNSIVSNVNVKERRSKPKKTPKKKKKSKSASSSKDNNVGFEERSNDNKEASLTLLIPIDAKKDDESEKKVNLERKSSRLVFQRRPTGIEVGANNIGTLQQPKMTRICSVSNGERGAQVMAGWPSWLASVAGEAINGWIPRKADSFEKLEKIGQGTYSSVYKARDLETNQLVALKKVRFANMDPDSVRFMAREIIILRRLDHPNVMKLEGLITSRVSGSMYLIFEYMEHDLAGLASTPGINFSEAQIKCYMKQLLHGLEHCHSRGVLHRDIKGSNLLLDHNNNLKIGDFGLANFYQGHQKQPLTSRVVTLWYRPPELLLGSTDYGVTVDLWSTGCILAELFTGKPIMPGRTEVEQLHKIFKLCGSPSEEYWKISKLPHATIFKPQQPYKRCVAETFKSLPSSALALVEVLLAVEPDARGTTASALESEFFTTSPLASDPSSLPKYQPRKEIDVKAQEEEAKRKKDTSSKQNDSKQVSRESKAVPAPDSNAESLTSIQKRQGQHNQVSNSDKFNPGEDAASFRIEPLKSGTAKDGHTRYGVSSVNRNGENVMMGSSRSPRKELRTQRSFVQRGTAQLSRFSNSVAARDGSHFAIANPRWFEDSYNNNNGRQNGGAWSQRLVVKHKEFTKHKESITVNGEKKERMHCSGPLVSAGGNLDEMLKEHERQIQLAVRKARVDKKTNRGDNRQTQAFLAANGR.

The interval 1–64 (MGCNCTKGTR…NVGFEERSND (64 aa)) is disordered. A lipid anchor (N-myristoyl glycine) is attached at glycine 2. Over residues 16–27 (VDNSNSIVSNVN) the composition is skewed to low complexity. Basic residues predominate over residues 31–46 (RRSKPKKTPKKKKKSK). A Protein kinase domain is found at 163–447 (FEKLEKIGQG…TASALESEFF (285 aa)). ATP-binding positions include 169 to 177 (IGQGTYSSV) and lysine 192. The Proton acceptor role is filled by aspartate 287. Residues 471-498 (KAQEEEAKRKKDTSSKQNDSKQVSRESK) are compositionally biased toward basic and acidic residues. 2 disordered regions span residues 471–579 (KAQE…RKEL) and 693–714 (VDKK…ANGR). Polar residues-rich tracts occupy residues 506 to 528 (NAES…NSDK) and 556 to 573 (GVSS…GSSR).

Belongs to the protein kinase superfamily. Ser/Thr protein kinase family.

The chain is Probable serine/threonine-protein kinase At1g09600 from Arabidopsis thaliana (Mouse-ear cress).